We begin with the raw amino-acid sequence, 1371 residues long: Soluble scavenger receptor cysteine-rich domain-containing protein SSC5D (1371 aa).

Residues 1–16 (MRGLACLLAMLVGIQA) form the signal peptide. Positions 20–120 (LRLADGPHGC…HEEDAGVVCV (101 aa)) constitute an SRCR 1 domain. 3 cysteine pairs are disulfide-bonded: C45-C109, C58-C119, and C89-C99. Positions 143–154 (LSGELSPSSEEP) are enriched in low complexity. A disordered region spans residues 143-200 (LSGELSPSSEEPPITHAPQPAASSQNGPRKKNPRPPKQTKSTRAPVLTNGAPHQERLR). SRCR domains follow at residues 199–299 (LRLV…LVCT) and 305–405 (IRLA…AVCD). 6 cysteine pairs are disulfide-bonded: C224–C288, C237–C298, C268–C278, C330–C394, C343–C404, and C374–C384. N-linked (GlcNAc...) asparagine glycans are attached at residues N377 and N422. Positions 431–466 (TSVGQMPGPAGPWPPSASPTAPPEPGPEAGSPQLRL) are disordered. Residues 439 to 456 (PAGPWPPSASPTAPPEPG) are compositionally biased toward pro residues. Residues 464-565 (LRLVAGPSRC…HNEDVGVTCT (102 aa)) form the SRCR 4 domain. Cystine bridges form between C489–C554, C502–C564, and C534–C544. The tract at residues 592 to 756 (WLPGELTTKP…AGVPVPSGPF (165 aa)) is disordered. Positions 599–611 (TKPSASLTSSVPQ) are enriched in polar residues. Residues 622–633 (KSTKKWVTKNAR) are compositionally biased toward basic residues. Residues 653-663 (TPTSLHPTART) show a composition bias toward polar residues. Residues 665-676 (ELPKRLTTEAPH) are compositionally biased toward basic and acidic residues. Residues 698 to 740 (PVVSQSTQGPQEVTSEATTTENPQTSLEPSGENTEGSLESSQD) are compositionally biased toward polar residues. Positions 741–755 (PATTPTAGVPVPSGP) are enriched in low complexity. An SRCR 5 domain is found at 758-858 (VRLADGPNRC…HEEDVVLTCT (101 aa)). Cystine bridges form between C783–C847, C796–C857, and C827–C837. Disordered regions lie at residues 888–1270 (RPGH…PFGP) and 1351–1371 (STPV…RGDV). Polar residues predominate over residues 894-912 (SWATTTNTEVPSPATQNLP). Low complexity-rich tracts occupy residues 936 to 957 (KGTP…KSPG), 981 to 1004 (PTSA…RQTS), and 1018 to 1035 (GTSS…LPSP). Composition is skewed to polar residues over residues 1039 to 1086 (ALST…TSEL) and 1102 to 1148 (SSDS…NPQQ). N1044 and N1131 each carry an N-linked (GlcNAc...) asparagine glycan. The span at 1149 to 1163 (PRSPHPATSPQPPTN) shows a compositional bias: pro residues. Residues 1164–1189 (THPSSTPATPTESLPSSRKTELSSPT) are compositionally biased toward polar residues. The segment covering 1218–1230 (ASESGPSSPSPAS) has biased composition (low complexity). Positions 1244–1261 (RSQTLHSASDHLTQGPTP) are enriched in polar residues.

As to quaternary structure, interacts with LGALS1 and laminin. Post-translationally, partially N- and O-glycosylated. As to expression, detected throughout the gastrointestinal and genitourinary tracts, in serosal salivary gland, the exocrine part of pancreas and testis, as well as in a few tubular structures in kidney. Not detected in lung and heart (at protein level). Strongly expressed in testis, kidney and pancreas, with lower levels detected in bone marrow, spleen, lung, liver, colon, stomach and skeletal muscle. Very low levels or no expression detected in thymus, esophagus, jejunum, ileum, duodenum, ovary, uterus, heart, trachea, brain, cerebellum and bladder.

The protein resides in the secreted. It is found in the cytoplasm. In terms of biological role, binds to extracellular matrix proteins. Binds to pathogen-associated molecular patterns (PAMPs) present on the cell walls of Gram-positive and Gram-negative bacteria and fungi, behaving as a pattern recognition receptor (PRR). Induces bacterial and fungal aggregation and subsequent inhibition of PAMP-induced cytokine release. Does not possess intrinsic bactericidal activity. May play a role in the innate defense and homeostasis of certain epithelial surfaces. The protein is Soluble scavenger receptor cysteine-rich domain-containing protein SSC5D (Ssc5d) of Mus musculus (Mouse).